A 103-amino-acid polypeptide reads, in one-letter code: Large ribosomal subunit protein bL21 (103 aa).

The protein belongs to the bacterial ribosomal protein bL21 family. In terms of assembly, part of the 50S ribosomal subunit. Contacts protein L20.

Functionally, this protein binds to 23S rRNA in the presence of protein L20. The sequence is that of Large ribosomal subunit protein bL21 from Parvibaculum lavamentivorans (strain DS-1 / DSM 13023 / NCIMB 13966).